The primary structure comprises 602 residues: Isocitrate dehydrogenase kinase/phosphatase (602 aa).

ATP-binding positions include 327–333 (APGIKGM) and lysine 348. Aspartate 383 is an active-site residue.

Belongs to the AceK family.

It localises to the cytoplasm. The enzyme catalyses L-seryl-[isocitrate dehydrogenase] + ATP = O-phospho-L-seryl-[isocitrate dehydrogenase] + ADP + H(+). Functionally, bifunctional enzyme which can phosphorylate or dephosphorylate isocitrate dehydrogenase (IDH) on a specific serine residue. This is a regulatory mechanism which enables bacteria to bypass the Krebs cycle via the glyoxylate shunt in response to the source of carbon. When bacteria are grown on glucose, IDH is fully active and unphosphorylated, but when grown on acetate or ethanol, the activity of IDH declines drastically concomitant with its phosphorylation. This Paraburkholderia phymatum (strain DSM 17167 / CIP 108236 / LMG 21445 / STM815) (Burkholderia phymatum) protein is Isocitrate dehydrogenase kinase/phosphatase.